A 980-amino-acid polypeptide reads, in one-letter code: Peroxisomal ATPase PEX6 (980 aa).

An Omega-N-methylarginine modification is found at arginine 119. Residues 470-477 (GPPGCGKT) and 744-751 (GPPGTGKT) each bind ATP.

It belongs to the AAA ATPase family. Interacts with PEX1; forming the PEX1-PEX6 AAA ATPase complex, which is composed of a heterohexamer formed by a trimer of PEX1-PEX6 dimers. Interacts with PEX26; interaction is direct and promotes recruitment to peroxisomal membranes. Interacts with ZFAND6. Expressed in the retina, at higher levels in the photoreceptor layer at the joint between the outer and inner segments.

It is found in the cytoplasm. Its subcellular location is the cytosol. It localises to the peroxisome membrane. The protein localises to the cell projection. The protein resides in the cilium. It is found in the photoreceptor outer segment. It catalyses the reaction ATP + H2O = ADP + phosphate + H(+). Component of the PEX1-PEX6 AAA ATPase complex, a protein dislocase complex that mediates the ATP-dependent extraction of the PEX5 receptor from peroxisomal membranes, an essential step for PEX5 recycling. Specifically recognizes PEX5 monoubiquitinated at 'Cys-11', and pulls it out of the peroxisome lumen through the PEX2-PEX10-PEX12 retrotranslocation channel. Extraction by the PEX1-PEX6 AAA ATPase complex is accompanied by unfolding of the TPR repeats and release of bound cargo from PEX5. The sequence is that of Peroxisomal ATPase PEX6 from Homo sapiens (Human).